Reading from the N-terminus, the 450-residue chain is Flavin-containing monooxygenase FMO GS-OX-like 5 (450 aa).

17–22 contributes to the FAD binding site; that stretch reads GAGPAG. 215–220 provides a ligand contact to NADP(+); that stretch reads GNSSSA.

It belongs to the FMO family. It depends on FAD as a cofactor.

Functionally, catalyzes the conversion of methylthioalkyl glucosinolates of any chain length into methylsulfinylalkyl glucosinolates. In Arabidopsis thaliana (Mouse-ear cress), this protein is Flavin-containing monooxygenase FMO GS-OX-like 5.